The primary structure comprises 149 residues: Large ribosomal subunit protein uL15 (149 aa).

Residues methionine 1 to glycine 53 form a disordered region. The segment covering threonine 23–histidine 35 has biased composition (gly residues). Residues lysine 36–lysine 47 show a composition bias toward basic residues.

It belongs to the universal ribosomal protein uL15 family. In terms of assembly, part of the 50S ribosomal subunit.

Functionally, binds to the 23S rRNA. The protein is Large ribosomal subunit protein uL15 of Coprothermobacter proteolyticus (strain ATCC 35245 / DSM 5265 / OCM 4 / BT).